Here is a 712-residue protein sequence, read N- to C-terminus: Ribosomal RNA large subunit methyltransferase K/L (712 aa).

The THUMP domain maps to 42–153 (QALRIVMWSR…KGRASLSIDL (112 aa)).

Belongs to the methyltransferase superfamily. RlmKL family.

Its subcellular location is the cytoplasm. The catalysed reaction is guanosine(2445) in 23S rRNA + S-adenosyl-L-methionine = N(2)-methylguanosine(2445) in 23S rRNA + S-adenosyl-L-homocysteine + H(+). It catalyses the reaction guanosine(2069) in 23S rRNA + S-adenosyl-L-methionine = N(2)-methylguanosine(2069) in 23S rRNA + S-adenosyl-L-homocysteine + H(+). Functionally, specifically methylates the guanine in position 2445 (m2G2445) and the guanine in position 2069 (m7G2069) of 23S rRNA. This is Ribosomal RNA large subunit methyltransferase K/L from Stenotrophomonas maltophilia (strain K279a).